We begin with the raw amino-acid sequence, 240 residues long: MLRSCAARLRTLGALCLPPVGRRLPGSEPRPELRSFSSEEVILKDCSVPNPSWNKDLRLLFDQFMKKCEDGSWKRLPSYKRTPTEWIQDFKTHFLDPKLMKEEQMSQAQLFTRSFDDGLGFEYVMFYNDIEKRMVCLFQGGPYLEGPPGFIHGGAIATMIDATVGMCAMMAGGIVMTANLNINYKRPIPLCSVVMINSQLDKVEGRKFFVSCNVQSVDEKTLYSEATSLFIKLNPAKSLT.

The N-terminal 36 residues, 1-36 (MLRSCAARLRTLGALCLPPVGRRLPGSEPRPELRSF), are a transit peptide targeting the mitochondrion. Residues serine 37 and serine 38 each carry the phosphoserine modification. Residues lysine 55 and lysine 66 each carry the N6-succinyllysine modification. An N6-acetyllysine modification is found at lysine 74. Lysine 98 bears the N6-succinyllysine mark. Aspartate 161 acts as the Proton donor/acceptor in catalysis. Substrate-binding positions include asparagine 183, lysine 185, and 206-207 (RK). Residue lysine 207 is modified to N6-succinyllysine.

The protein belongs to the THEM4/THEM5 thioesterase family. As to quaternary structure, homodimer and homotetramer. Interacts with AKT1 in the cytosol. Phosphorylated. Expressed predominantly in skeletal muscle, testis, uterus, brain and kidney. Down-regulated in glioblastoma or glioma compared to non-neoplastic brain due to promoter hypermethylation.

It localises to the cell membrane. Its subcellular location is the cell projection. The protein localises to the ruffle membrane. It is found in the cytoplasm. The protein resides in the mitochondrion. It localises to the mitochondrion inner membrane. Its subcellular location is the mitochondrion intermembrane space. The enzyme catalyses hexadecanoyl-CoA + H2O = hexadecanoate + CoA + H(+). It carries out the reaction octanoyl-CoA + H2O = octanoate + CoA + H(+). The catalysed reaction is decanoyl-CoA + H2O = decanoate + CoA + H(+). It catalyses the reaction dodecanoyl-CoA + H2O = dodecanoate + CoA + H(+). The enzyme catalyses tetradecanoyl-CoA + H2O = tetradecanoate + CoA + H(+). It carries out the reaction (9Z)-octadecenoyl-CoA + H2O = (9Z)-octadecenoate + CoA + H(+). The catalysed reaction is (5Z,8Z,11Z,14Z)-eicosatetraenoyl-CoA + H2O = (5Z,8Z,11Z,14Z)-eicosatetraenoate + CoA + H(+). Its function is as follows. Has acyl-CoA thioesterase activity towards medium and long-chain (C14 to C18) fatty acyl-CoA substrates, and probably plays a role in mitochondrial fatty acid metabolism. Plays a role in the apoptotic process, possibly via its regulation of AKT1 activity. According to PubMed:11598301, inhibits AKT1 phosphorylation and activity. According to PubMed:17615157, enhances AKT1 activity by favoring its phosphorylation and translocation to plasma membrane. In Homo sapiens (Human), this protein is Acyl-coenzyme A thioesterase THEM4 (THEM4).